The sequence spans 533 residues: Glucose-6-phosphate isomerase (533 aa).

Catalysis depends on Glu-341, which acts as the Proton donor. Active-site residues include His-372 and Lys-501.

It belongs to the GPI family.

The protein resides in the cytoplasm. It catalyses the reaction alpha-D-glucose 6-phosphate = beta-D-fructose 6-phosphate. The protein operates within carbohydrate biosynthesis; gluconeogenesis. Its pathway is carbohydrate degradation; glycolysis; D-glyceraldehyde 3-phosphate and glycerone phosphate from D-glucose: step 2/4. In terms of biological role, catalyzes the reversible isomerization of glucose-6-phosphate to fructose-6-phosphate. The chain is Glucose-6-phosphate isomerase from Cereibacter sphaeroides (strain KD131 / KCTC 12085) (Rhodobacter sphaeroides).